Consider the following 442-residue polypeptide: tRNA-2-methylthio-N(6)-dimethylallyladenosine synthase (442 aa).

The region spanning 2–120 (KKVFIRTFGC…LPKMIVDKET (119 aa)) is the MTTase N-terminal domain. Positions 11, 49, 83, 157, 161, and 164 each coordinate [4Fe-4S] cluster. Residues 143-375 (RVEGGAAFVS…NEVIEAETAR (233 aa)) form the Radical SAM core domain. Residues 378–441 (QTMIGTVQRC…TFSLRGKVVE (64 aa)) enclose the TRAM domain.

The protein belongs to the methylthiotransferase family. MiaB subfamily. Monomer. The cofactor is [4Fe-4S] cluster.

The protein resides in the cytoplasm. It catalyses the reaction N(6)-dimethylallyladenosine(37) in tRNA + (sulfur carrier)-SH + AH2 + 2 S-adenosyl-L-methionine = 2-methylsulfanyl-N(6)-dimethylallyladenosine(37) in tRNA + (sulfur carrier)-H + 5'-deoxyadenosine + L-methionine + A + S-adenosyl-L-homocysteine + 2 H(+). Its function is as follows. Catalyzes the methylthiolation of N6-(dimethylallyl)adenosine (i(6)A), leading to the formation of 2-methylthio-N6-(dimethylallyl)adenosine (ms(2)i(6)A) at position 37 in tRNAs that read codons beginning with uridine. The protein is tRNA-2-methylthio-N(6)-dimethylallyladenosine synthase of Neisseria meningitidis serogroup C (strain 053442).